The sequence spans 95 residues: UPF0358 protein GK1077 (95 aa).

Belongs to the UPF0358 family.

The protein is UPF0358 protein GK1077 of Geobacillus kaustophilus (strain HTA426).